A 155-amino-acid chain; its full sequence is Putative pre-16S rRNA nuclease (155 aa).

It belongs to the YqgF nuclease family.

It localises to the cytoplasm. Functionally, could be a nuclease involved in processing of the 5'-end of pre-16S rRNA. This chain is Putative pre-16S rRNA nuclease, found in Xanthomonas axonopodis pv. citri (strain 306).